We begin with the raw amino-acid sequence, 427 residues long: Serine--tRNA ligase (427 aa).

An L-serine-binding site is contributed by Thr231–Glu233. Residue Arg262–Glu264 coordinates ATP. Glu285 is a binding site for L-serine. Glu349 to Ser352 provides a ligand contact to ATP. Ser385 contributes to the L-serine binding site.

The protein belongs to the class-II aminoacyl-tRNA synthetase family. Type-1 seryl-tRNA synthetase subfamily. In terms of assembly, homodimer. The tRNA molecule binds across the dimer.

It localises to the cytoplasm. The catalysed reaction is tRNA(Ser) + L-serine + ATP = L-seryl-tRNA(Ser) + AMP + diphosphate + H(+). It catalyses the reaction tRNA(Sec) + L-serine + ATP = L-seryl-tRNA(Sec) + AMP + diphosphate + H(+). Its pathway is aminoacyl-tRNA biosynthesis; selenocysteinyl-tRNA(Sec) biosynthesis; L-seryl-tRNA(Sec) from L-serine and tRNA(Sec): step 1/1. Functionally, catalyzes the attachment of serine to tRNA(Ser). Is also able to aminoacylate tRNA(Sec) with serine, to form the misacylated tRNA L-seryl-tRNA(Sec), which will be further converted into selenocysteinyl-tRNA(Sec). The sequence is that of Serine--tRNA ligase from Methylococcus capsulatus (strain ATCC 33009 / NCIMB 11132 / Bath).